A 276-amino-acid chain; its full sequence is Secretagogin (276 aa).

6 EF-hand domains span residues 12-47 (LDAACFWQIWQRFDKEEKGYIRETELDAFFDHLLAK), 58-93 (NVQKVKEQLMTSHNVSKEGRILMKELASMFLSEDEN), 105-140 (DNSVEFMQIWRKYDADSSGFISAAELCNFLRDLFLH), 149-184 (ELEEYTSTMMKIFDKNKDGRLDLNDLARILALQENF), 197-232 (ERKRDFEKIFAHYDVSKTGALEGPEVDGFVKDMMEL), and 240-276 (VDLDKFREILLRHCDVNKDGKIQKSELALCLGLKINP). Residues Asp-25, Tyr-31, Glu-36, Ser-73, Glu-75, Arg-77, Glu-82, Asp-118, Asp-120, Ser-122, Glu-129, Asp-162, Asn-164, Asp-166, Arg-168, Asp-173, Asp-210, Ser-212, Thr-214, Glu-221, Asp-254, Asn-256, Asp-258, Lys-260, and Glu-265 each contribute to the Ca(2+) site.

It is found in the cytoplasm. The protein localises to the secreted. It localises to the cytoplasmic vesicle. Its subcellular location is the secretory vesicle membrane. This Mus musculus (Mouse) protein is Secretagogin (Scgn).